The following is a 60-amino-acid chain: Large ribosomal subunit protein bL32 (60 aa).

Residues 1 to 19 are compositionally biased toward basic residues; the sequence is MAVPKRRTSKRRKRARNTH. Residues 1 to 20 form a disordered region; the sequence is MAVPKRRTSKRRKRARNTHK.

This sequence belongs to the bacterial ribosomal protein bL32 family.

The chain is Large ribosomal subunit protein bL32 from Gemmatimonas aurantiaca (strain DSM 14586 / JCM 11422 / NBRC 100505 / T-27).